The sequence spans 103 residues: Somatoliberin (103 aa).

The N-terminal stretch at 1–19 is a signal peptide; it reads MLLWVLFVILILTSGSHCS. Propeptides lie at residues 20–30 and 74–103; these read LPPSPPFRMQR and QEDS…SADA.

The protein belongs to the glucagon family.

Its subcellular location is the secreted. Its function is as follows. GRF is released by the hypothalamus and acts on the adenohypophyse to stimulate the secretion of growth hormone. This is Somatoliberin (Ghrh) from Mus musculus (Mouse).